The sequence spans 215 residues: Cytochrome b6 (215 aa).

Residues 32-52 (IFYCFGGIVFTCFLVQVATGF) form a helical membrane-spanning segment. Residue Cys-35 coordinates heme c. Residues His-86 and His-100 each coordinate heme b. Helical transmembrane passes span 90 to 110 (ASMM…TGGF), 116 to 136 (LTWV…VTGY), and 186 to 206 (AHTF…FLMI). Residues His-187 and His-202 each coordinate heme b.

Belongs to the cytochrome b family. PetB subfamily. In terms of assembly, the 4 large subunits of the cytochrome b6-f complex are cytochrome b6, subunit IV (17 kDa polypeptide, PetD), cytochrome f and the Rieske protein, while the 4 small subunits are PetG, PetL, PetM and PetN. The complex functions as a dimer. The cofactor is heme b. Requires heme c as cofactor.

The protein resides in the plastid. Its subcellular location is the chloroplast thylakoid membrane. Functionally, component of the cytochrome b6-f complex, which mediates electron transfer between photosystem II (PSII) and photosystem I (PSI), cyclic electron flow around PSI, and state transitions. The polypeptide is Cytochrome b6 (Trieres chinensis (Marine centric diatom)).